Here is a 394-residue protein sequence, read N- to C-terminus: Probable ribosome production factor 1 (394 aa).

2 disordered regions span residues 1 to 98 (MIKI…PVLN) and 116 to 152 (MKKE…EKDQ). 2 stretches are compositionally biased toward acidic residues: residues 15-33 (QDSD…DLEV) and 59-88 (ASED…DDDD). Residues 116–134 (MKKEKHKKKMQERRARRKA) are compositionally biased toward basic residues. Positions 185–369 (PKVLITFADN…LRSLQEGTFD (185 aa)) constitute a Brix domain. Positions 347–364 (VKLRELGPRFTLKLRSLQ) are RNA-binding.

It is found in the nucleus. Its subcellular location is the nucleolus. In terms of biological role, may be required for ribosome biogenesis. The sequence is that of Probable ribosome production factor 1 from Drosophila melanogaster (Fruit fly).